We begin with the raw amino-acid sequence, 193 residues long: MNGYLMLFIGTVLVNNFVLVKFLGLCPFMGVSKKVETALGMGMATTFVMTLASICAWLINDFILLPLNIPYLRTLAFIFIIAVVVQFTELVVRKTSPALYRLLGIFLPLITTNCAVLGVALLNVNENHNFLQSALYGFSAAVGFSLVMVLFAAIRERLAVADVPAPFKGSSIALITAGLMSLAFMGFTGLVKV.

Transmembrane regions (helical) follow at residues 5–25 (LMLF…FLGL), 39–59 (LGMG…AWLI), 62–82 (FILL…FIIA), 102–122 (LLGI…VALL), 134–154 (ALYG…FAAI), and 171–191 (SIAL…TGLV).

This sequence belongs to the NqrDE/RnfAE family. The complex is composed of six subunits: RnfA, RnfB, RnfC, RnfD, RnfE and RnfG.

The protein resides in the cell inner membrane. Functionally, part of a membrane-bound complex that couples electron transfer with translocation of ions across the membrane. The polypeptide is Ion-translocating oxidoreductase complex subunit A (Sodalis glossinidius (strain morsitans)).